Consider the following 72-residue polypeptide: UPF0270 protein YheU (72 aa).

The protein belongs to the UPF0270 family.

This Salmonella dublin (strain CT_02021853) protein is UPF0270 protein YheU.